The sequence spans 166 residues: MSEAAIAKKAEIVKQTTDMLNAAQSAIVVDYRGLTVAEVTDLRKQLRDAGIQMSVIKNKILDRAVEGTDYEDLRSTFVGPTAVAFSDEDPIAPAKILKKFADDHDALEIKGGFIEKSVKTLDEINEYANMPGREELLSMLASALQDPMRKIARAVKAIADKEDEAA.

It belongs to the universal ribosomal protein uL10 family. Part of the ribosomal stalk of the 50S ribosomal subunit. The N-terminus interacts with L11 and the large rRNA to form the base of the stalk. The C-terminus forms an elongated spine to which L12 dimers bind in a sequential fashion forming a multimeric L10(L12)X complex.

In terms of biological role, forms part of the ribosomal stalk, playing a central role in the interaction of the ribosome with GTP-bound translation factors. This is Large ribosomal subunit protein uL10 from Limosilactobacillus reuteri (strain DSM 20016) (Lactobacillus reuteri).